Here is a 23-residue protein sequence, read N- to C-terminus: Alyteserin-1d (23 aa).

Position 23 is an asparagine amide (Asn-23).

As to expression, expressed by the skin glands.

The protein localises to the secreted. It is found in the target cell membrane. In terms of biological role, antibacterial peptide with amphipathic alpha-helical structure. Shows selective growth inhibitory activity against the Gram-negative bacteria E.coli (MIC=25 uM) Has a weak hemolytic activity against human erythrocytes (LC(50)&gt;100 uM). Is very weakly active against S.aureus (MIC=200 uM). The sequence is that of Alyteserin-1d from Alytes obstetricans (Common midwife toad).